Here is a 315-residue protein sequence, read N- to C-terminus: Olfactory receptor 51L1 (315 aa).

Residues 1–27 lie on the Extracellular side of the membrane; sequence MGDWNNSDAVEPIFILRGFPGLEYVHS. A glycan (N-linked (GlcNAc...) asparagine) is linked at N5. The helical transmembrane segment at 28–48 threads the bilayer; it reads WLSILFCLAYLVAFMGNVTIL. Topologically, residues 49–56 are cytoplasmic; it reads SVIWIESS. The chain crosses the membrane as a helical span at residues 57–77; it reads LHQPMYYFISILAVNDLGMSL. Over 78–101 the chain is Extracellular; that stretch reads STLPTMLAVLWLDAPEIQASACYA. Cysteines 99 and 191 form a disulfide. The chain crosses the membrane as a helical span at residues 102 to 122; the sequence is QLFFIHTFTFLESSVLLAMAF. At 123-141 the chain is on the cytoplasmic side; the sequence is DRFVAICHPLHYPTILTNS. A helical membrane pass occupies residues 142-162; sequence VIGKIGLACLLRSLGVVLPTP. At 163 to 198 the chain is on the extracellular side; that stretch reads LLLRHYHYCHGNALSHAFCLHQDVLRLSCTDARTNS. The chain crosses the membrane as a helical span at residues 199 to 219; the sequence is IYGLCVVIATLGVDSIFILLS. At 220–239 the chain is on the cytoplasmic side; that stretch reads YVLILNTVLDIASREEQLKA. A helical transmembrane segment spans residues 240–260; the sequence is LNTCVSHICVVLIFFVPVIGV. Residues 261–275 are Extracellular-facing; the sequence is SMVHRFGKHLSPIVH. The chain crosses the membrane as a helical span at residues 276 to 296; sequence ILMADIYLLLPPVLNPIVYSV. Residues 297 to 315 lie on the Cytoplasmic side of the membrane; sequence RTKQIRLGILHKFVLRRRF.

This sequence belongs to the G-protein coupled receptor 1 family.

The protein localises to the cell membrane. Odorant receptor. In Homo sapiens (Human), this protein is Olfactory receptor 51L1 (OR51L1).